The chain runs to 72 residues: SPbeta prophage-derived uncharacterized protein YorV (72 aa).

This is SPbeta prophage-derived uncharacterized protein YorV (yorV) from Bacillus subtilis (strain 168).